Reading from the N-terminus, the 145-residue chain is UPF0735 ACT domain-containing protein CLD_1535 (145 aa).

Positions 69-144 constitute an ACT domain; sequence TIGLLLGHER…NVIKVDLIAM (76 aa).

This sequence belongs to the UPF0735 family.

The chain is UPF0735 ACT domain-containing protein CLD_1535 from Clostridium botulinum (strain Okra / Type B1).